A 251-amino-acid chain; its full sequence is Small ribosomal subunit protein uS3 (251 aa).

Residues 22–93 form the KH type-2 domain; sequence LNEFFTRELA…GIAIYAERVE (72 aa). The segment at 223–251 is disordered; that stretch reads TVKSYKQTAEDETETDAPVEAEAEVEATA. Residues 232–251 show a composition bias toward acidic residues; that stretch reads EDETETDAPVEAEAEVEATA.

It belongs to the universal ribosomal protein uS3 family. In terms of assembly, component of the small ribosomal subunit. Mature ribosomes consist of a small (40S) and a large (60S) subunit. The 40S subunit contains about 32 different proteins and 1 molecule of RNA (18S). The 60S subunit contains 45 different proteins and 3 molecules of RNA (25S, 5.8S and 5S).

Its subcellular location is the cytoplasm. In terms of biological role, component of the ribosome, a large ribonucleoprotein complex responsible for the synthesis of proteins in the cell. The small ribosomal subunit (SSU) binds messenger RNAs (mRNAs) and translates the encoded message by selecting cognate aminoacyl-transfer RNA (tRNA) molecules. The large subunit (LSU) contains the ribosomal catalytic site termed the peptidyl transferase center (PTC), which catalyzes the formation of peptide bonds, thereby polymerizing the amino acids delivered by tRNAs into a polypeptide chain. The nascent polypeptides leave the ribosome through a tunnel in the LSU and interact with protein factors that function in enzymatic processing, targeting, and the membrane insertion of nascent chains at the exit of the ribosomal tunnel. The protein is Small ribosomal subunit protein uS3 (RPS3) of Candida albicans (strain SC5314 / ATCC MYA-2876) (Yeast).